The primary structure comprises 249 residues: tRNA (guanine-N(1)-)-methyltransferase (249 aa).

Residues Gly112 and 132-137 contribute to the S-adenosyl-L-methionine site; that span reads LGDFVL.

This sequence belongs to the RNA methyltransferase TrmD family. Homodimer.

The protein localises to the cytoplasm. It catalyses the reaction guanosine(37) in tRNA + S-adenosyl-L-methionine = N(1)-methylguanosine(37) in tRNA + S-adenosyl-L-homocysteine + H(+). Functionally, specifically methylates guanosine-37 in various tRNAs. This Citrifermentans bemidjiense (strain ATCC BAA-1014 / DSM 16622 / JCM 12645 / Bem) (Geobacter bemidjiensis) protein is tRNA (guanine-N(1)-)-methyltransferase.